A 680-amino-acid polypeptide reads, in one-letter code: Lipase 1 (680 aa).

An N-terminal signal peptide occupies residues 1–34 (MKSQNKYSIRKFSVGASSILIATLLFLSGGQAQA). The propeptide occupies 35–290 (AEKQVNMGNS…AKAKDDQTNK (256 aa)). Residues 82 to 259 (KNLHNDKTIS…PTKDNDKKNG (178 aa)) are disordered. Over residues 84 to 112 (LHNDKTISEENHRKTDDLNKDQLKDDKKS) the composition is skewed to basic and acidic residues. The segment covering 125 to 138 (KNNNANPSDVNQGL) has biased composition (polar residues). Residues 148–170 (SKVASQQQSKEADNSQDSNANNN) show a composition bias toward low complexity. Over residues 204 to 223 (QPQQNNQANDKITNYNFNNE) the composition is skewed to polar residues. Residues 224–234 (QEVKPQKDEKT) are compositionally biased toward basic and acidic residues. A compositionally biased stretch (polar residues) spans 235–246 (LSVSDLKNNQKS). The active-site Nucleophile is the Ser-408. The active-site Charge relay system is the Asp-600. Asp-638 is a Ca(2+) binding site. His-639 (charge relay system) is an active-site residue. 3 residues coordinate Ca(2+): Asp-641, Asp-646, and Asp-649.

The protein belongs to the AB hydrolase superfamily. Lipase family.

It localises to the secreted. The catalysed reaction is a triacylglycerol + H2O = a diacylglycerol + a fatty acid + H(+). This chain is Lipase 1 (lip1), found in Staphylococcus aureus (strain MSSA476).